The sequence spans 484 residues: Coronin-1B (484 aa).

At Ser-2 the chain carries Phosphoserine. WD repeat units lie at residues 80-120 (GHTG…LTSP), 130-170 (GHTK…ELYR), 174-213 (LHPD…LVAE), 217-260 (AHEG…EPMA), and 265-305 (DSSN…PYIH). A coiled-coil region spans residues 447-481 (KLEEVMHGLRALRVLVKEQGERISRLEEHLGRMEN).

The protein belongs to the WD repeat coronin family. As to quaternary structure, forms homooligomers, but does not form complexes with the other coronins. Interacts with Arp2/3 complex components, including ACTR2, ARPC1B and ARPC2. Binds actin. Phosphorylation on Ser-2 regulates the interaction with the Arp2/3 complex and cell motility in fibroblasts. Phosphorylation does not seem to affect subcellular location.

The protein localises to the cytoplasm. It localises to the cytoskeleton. It is found in the stress fiber. Regulates leading edge dynamics and cell motility in fibroblasts. May be involved in cytokinesis and signal transduction. This chain is Coronin-1B (Coro1b), found in Rattus norvegicus (Rat).